A 404-amino-acid chain; its full sequence is Arginine biosynthesis bifunctional protein ArgJ (404 aa).

Residues Thr166, Lys189, Thr200, Glu280, Asn399, and Ser404 each coordinate substrate. Thr200 (nucleophile) is an active-site residue.

This sequence belongs to the ArgJ family. In terms of assembly, heterotetramer of two alpha and two beta chains.

Its subcellular location is the cytoplasm. The catalysed reaction is N(2)-acetyl-L-ornithine + L-glutamate = N-acetyl-L-glutamate + L-ornithine. The enzyme catalyses L-glutamate + acetyl-CoA = N-acetyl-L-glutamate + CoA + H(+). Its pathway is amino-acid biosynthesis; L-arginine biosynthesis; L-ornithine and N-acetyl-L-glutamate from L-glutamate and N(2)-acetyl-L-ornithine (cyclic): step 1/1. It functions in the pathway amino-acid biosynthesis; L-arginine biosynthesis; N(2)-acetyl-L-ornithine from L-glutamate: step 1/4. Functionally, catalyzes two activities which are involved in the cyclic version of arginine biosynthesis: the synthesis of N-acetylglutamate from glutamate and acetyl-CoA as the acetyl donor, and of ornithine by transacetylation between N(2)-acetylornithine and glutamate. The protein is Arginine biosynthesis bifunctional protein ArgJ of Mycolicibacterium paratuberculosis (strain ATCC BAA-968 / K-10) (Mycobacterium paratuberculosis).